The primary structure comprises 177 residues: uncharacterized protein (177 aa).

Residues 1-27 (MSHSRRAAPTQDQCHTPGFPTSRETSG) are disordered.

This is an uncharacterized protein from Homo sapiens (Human).